Consider the following 258-residue polypeptide: Phosphate import ATP-binding protein PstB 2 (258 aa).

The 242-residue stretch at 12-253 (IQVRDLNFYY…PRQKQTEDYI (242 aa)) folds into the ABC transporter domain. Position 44–51 (44–51 (GPSGCGKS)) interacts with ATP.

It belongs to the ABC transporter superfamily. Phosphate importer (TC 3.A.1.7) family. In terms of assembly, the complex is composed of two ATP-binding proteins (PstB), two transmembrane proteins (PstC and PstA) and a solute-binding protein (PstS).

The protein localises to the cell inner membrane. It carries out the reaction phosphate(out) + ATP + H2O = ADP + 2 phosphate(in) + H(+). Functionally, part of the ABC transporter complex PstSACB involved in phosphate import. Responsible for energy coupling to the transport system. The sequence is that of Phosphate import ATP-binding protein PstB 2 from Pectobacterium atrosepticum (strain SCRI 1043 / ATCC BAA-672) (Erwinia carotovora subsp. atroseptica).